We begin with the raw amino-acid sequence, 119 residues long: Large ribosomal subunit protein bL20 (119 aa).

It belongs to the bacterial ribosomal protein bL20 family.

Binds directly to 23S ribosomal RNA and is necessary for the in vitro assembly process of the 50S ribosomal subunit. It is not involved in the protein synthesizing functions of that subunit. This is Large ribosomal subunit protein bL20 from Bradyrhizobium sp. (strain BTAi1 / ATCC BAA-1182).